The sequence spans 695 residues: uncharacterized protein (695 aa).

Disordered regions lie at residues 1–112 and 242–262; these read MSRL…KHKK and MKKV…NNDH. Low complexity predominate over residues 32–47; sequence DSSSSSDSPNFFPSSS. The span at 96–107 shows a compositional bias: basic and acidic residues; sequence KTEKEKEKEPIQ. A tr-type G domain is found at 278–492; it reads KPRTKLLLLG…KIDKEADTNH (215 aa). Residues 287–294, 357–361, and 417–420 contribute to the GTP site; these read GPPKSGKK, IFTTN, and TKMD.

The protein belongs to the TRAFAC class translation factor GTPase superfamily. Classic translation factor GTPase family.

The protein localises to the cytoplasm. It localises to the nucleus. This is an uncharacterized protein from Schizosaccharomyces pombe (strain 972 / ATCC 24843) (Fission yeast).